Here is a 428-residue protein sequence, read N- to C-terminus: Enolase (428 aa).

A (2R)-2-phosphoglycerate-binding site is contributed by Q173. Catalysis depends on E217, which acts as the Proton donor. D253, E294, and D320 together coordinate Mg(2+). (2R)-2-phosphoglycerate-binding residues include K345, R374, S375, and K396. The active-site Proton acceptor is the K345.

This sequence belongs to the enolase family. It depends on Mg(2+) as a cofactor.

The protein localises to the cytoplasm. It is found in the secreted. Its subcellular location is the cell surface. The catalysed reaction is (2R)-2-phosphoglycerate = phosphoenolpyruvate + H2O. The protein operates within carbohydrate degradation; glycolysis; pyruvate from D-glyceraldehyde 3-phosphate: step 4/5. In terms of biological role, catalyzes the reversible conversion of 2-phosphoglycerate (2-PG) into phosphoenolpyruvate (PEP). It is essential for the degradation of carbohydrates via glycolysis. The sequence is that of Enolase from Methanosarcina mazei (strain ATCC BAA-159 / DSM 3647 / Goe1 / Go1 / JCM 11833 / OCM 88) (Methanosarcina frisia).